Reading from the N-terminus, the 157-residue chain is MLELDIQRATDAATPEDAALRRWCELALRQRSADSEMTIRLVDEAEGRELNHTYRHKDYATNVLSFPADVPDELLDIPLLGDLVICVAVVEREAAEQGKSLEAHWAHLVIHGCLHLLGYDHIEDEEAEEMESLERELLAELGHPDPYADDETDSITH.

Zn(2+)-binding residues include histidine 111, histidine 115, and histidine 121. The disordered stretch occupies residues 136–157; that stretch reads ELLAELGHPDPYADDETDSITH. Residues 147 to 157 show a composition bias toward acidic residues; sequence YADDETDSITH.

Belongs to the endoribonuclease YbeY family. Zn(2+) serves as cofactor.

It localises to the cytoplasm. Its function is as follows. Single strand-specific metallo-endoribonuclease involved in late-stage 70S ribosome quality control and in maturation of the 3' terminus of the 16S rRNA. This is Endoribonuclease YbeY from Pseudomonas putida (strain ATCC 700007 / DSM 6899 / JCM 31910 / BCRC 17059 / LMG 24140 / F1).